The following is a 513-amino-acid chain: CUGBP Elav-like family member 2 (513 aa).

RRM domains are found at residues 35–118, 127–207, and 428–506; these read IKMF…PADS, RKLF…FADT, and ANLF…LKRS.

It belongs to the CELF/BRUNOL family.

It is found in the nucleus. It localises to the cytoplasm. RNA-binding protein implicated in the regulation of several post-transcriptional events. May be involved in pre-mRNA alternative splicing, mRNA translation repression and stability. The chain is CUGBP Elav-like family member 2 (celf2) from Xenopus tropicalis (Western clawed frog).